The chain runs to 387 residues: Exodeoxyribonuclease 7 large subunit (387 aa).

It belongs to the XseA family. As to quaternary structure, heterooligomer composed of large and small subunits.

The protein localises to the cytoplasm. It carries out the reaction Exonucleolytic cleavage in either 5'- to 3'- or 3'- to 5'-direction to yield nucleoside 5'-phosphates.. Bidirectionally degrades single-stranded DNA into large acid-insoluble oligonucleotides, which are then degraded further into small acid-soluble oligonucleotides. In Synechococcus sp. (strain CC9605), this protein is Exodeoxyribonuclease 7 large subunit.